Here is a 302-residue protein sequence, read N- to C-terminus: 4-hydroxy-tetrahydrodipicolinate synthase (302 aa).

Position 55 (T55) interacts with pyruvate. The active-site Proton donor/acceptor is the Y144. K172 acts as the Schiff-base intermediate with substrate in catalysis. Position 214 (V214) interacts with pyruvate.

It belongs to the DapA family. In terms of assembly, homotetramer; dimer of dimers.

The protein resides in the cytoplasm. It carries out the reaction L-aspartate 4-semialdehyde + pyruvate = (2S,4S)-4-hydroxy-2,3,4,5-tetrahydrodipicolinate + H2O + H(+). It participates in amino-acid biosynthesis; L-lysine biosynthesis via DAP pathway; (S)-tetrahydrodipicolinate from L-aspartate: step 3/4. Its function is as follows. Catalyzes the condensation of (S)-aspartate-beta-semialdehyde [(S)-ASA] and pyruvate to 4-hydroxy-tetrahydrodipicolinate (HTPA). The protein is 4-hydroxy-tetrahydrodipicolinate synthase of Synechococcus sp. (strain WH7803).